Reading from the N-terminus, the 783-residue chain is Probable potassium transporter 2 (783 aa).

The Cytoplasmic portion of the chain corresponds to 1-21; that stretch reads MDAEAGVGGADQLPWRQHYRN. Residues 22 to 42 form a helical membrane-spanning segment; the sequence is LLLLAYQSFGVVYGDLSTSPL. The Extracellular segment spans residues 43–61; that stretch reads YVYKSTFSGRLRRYQDEQT. A helical transmembrane segment spans residues 62–82; that stretch reads VFGVLSLIFWTFTLIPLLKYV. Residues 83 to 152 are Cytoplasmic-facing; sequence TIVLSADDNG…FMEKHKNART (70 aa). A helical membrane pass occupies residues 153–173; it reads VLLLIVLCGASMMIGDGILTP. Topologically, residues 174–189 are extracellular; the sequence is AISVLSSMSGLKVRAT. A helical membrane pass occupies residues 190-210; sequence GLHDRSVVLLSCIVLVGLFAL. The Cytoplasmic segment spans residues 211 to 217; the sequence is QHRGTQK. A helical transmembrane segment spans residues 218–238; the sequence is VAFMFAPIVVIWLFCIGGIGL. Over 239 to 268 the chain is Extracellular; sequence YNIIHWNPRIYQALSPYYIVKFFRTTGKDG. A helical membrane pass occupies residues 269 to 289; the sequence is WIALGGILLSMTGCEAMFADL. Over 290 to 298 the chain is Cytoplasmic; it reads GHFTSASVR. The helical transmembrane segment at 299–319 threads the bilayer; sequence LAFITIIYPCLILQYMGQAAF. The Extracellular segment spans residues 320 to 338; it reads LSKNILDMPTGFYDSIPGP. A helical transmembrane segment spans residues 339 to 359; the sequence is IFWPVFVVATLAAVVGSQAVI. Residues 360–390 lie on the Cytoplasmic side of the membrane; the sequence is SATFSIVKQCHSLGCFPRVKVVHTSRWIYGQ. Residues 391 to 411 form a helical membrane-spanning segment; sequence IYIPEINWILMVLCVAVTVAF. Residues 412–422 lie on the Extracellular side of the membrane; the sequence is RDITLIGNAYG. A helical membrane pass occupies residues 423-443; sequence VACMTVMFVTTFLMALIMIFV. Topologically, residues 444-447 are cytoplasmic; the sequence is WQKN. Residues 448 to 468 form a helical membrane-spanning segment; the sequence is IIFALSFFLLFGSVEVVYLSS. The Extracellular portion of the chain corresponds to 469–475; the sequence is SLMKVTQ. The helical transmembrane segment at 476–496 threads the bilayer; the sequence is GGWVPLVLALIFMSVMYIWHY. At 497-783 the chain is on the cytoplasmic side; the sequence is GTRKKYQYDL…LIEVGMAYQV (287 aa). The interval 662-691 is disordered; the sequence is DLADSMTMRSTKSESLRSLQSSYEQESPNV. The segment covering 677-691 has biased composition (polar residues); the sequence is LRSLQSSYEQESPNV.

Belongs to the HAK/KUP transporter (TC 2.A.72.3) family.

The protein localises to the cell membrane. It catalyses the reaction K(+)(in) = K(+)(out). It carries out the reaction Na(+)(in) = Na(+)(out). High-affinity potassium transporter. Can transport sodium under high sodium and low potassium concentrations in the extracellular environment. This Oryza sativa subsp. japonica (Rice) protein is Probable potassium transporter 2 (HAK2).